The primary structure comprises 354 residues: Probable L-ascorbate-6-phosphate lactonase UlaG (354 aa).

It belongs to the UlaG family. A divalent metal cation is required as a cofactor.

Its subcellular location is the cytoplasm. The catalysed reaction is L-ascorbate 6-phosphate + H2O = 3-dehydro-L-gulonate 6-phosphate. It participates in cofactor degradation; L-ascorbate degradation; D-xylulose 5-phosphate from L-ascorbate: step 1/4. In terms of biological role, probably catalyzes the hydrolysis of L-ascorbate-6-P into 3-keto-L-gulonate-6-P. Is essential for L-ascorbate utilization under anaerobic conditions. This chain is Probable L-ascorbate-6-phosphate lactonase UlaG, found in Salmonella heidelberg (strain SL476).